The chain runs to 155 residues: Large ribosomal subunit protein eL24 (155 aa).

The span at 94-129 shows a compositional bias: basic and acidic residues; sequence RSLKPEVRKAQRDEKKKADKEKKKADKAARKSEKAK. A disordered region spans residues 94-155; that stretch reads RSLKPEVRKA…AFQKVAATSR (62 aa).

The protein belongs to the eukaryotic ribosomal protein eL24 family.

The sequence is that of Large ribosomal subunit protein eL24 (RPL24) from Kluyveromyces lactis (strain ATCC 8585 / CBS 2359 / DSM 70799 / NBRC 1267 / NRRL Y-1140 / WM37) (Yeast).